The sequence spans 251 residues: uncharacterized protein (251 aa).

An N-terminal signal peptide occupies residues 1 to 18; the sequence is MRILIILSIILCSFFARA.

Belongs to the MlaA family.

This is an uncharacterized protein from Rickettsia typhi (strain ATCC VR-144 / Wilmington).